Here is a 255-residue protein sequence, read N- to C-terminus: Geranylgeranylglyceryl phosphate synthase (255 aa).

The Mg(2+) site is built by Asp26 and Ser55. Sn-glycerol 1-phosphate is bound by residues 174 to 180 (YLEAGSG), 205 to 206 (GG), and 227 to 228 (GT).

The protein belongs to the GGGP/HepGP synthase family. Group II subfamily. Requires Mg(2+) as cofactor.

Its subcellular location is the cytoplasm. It catalyses the reaction sn-glycerol 1-phosphate + (2E,6E,10E)-geranylgeranyl diphosphate = sn-3-O-(geranylgeranyl)glycerol 1-phosphate + diphosphate. Its pathway is membrane lipid metabolism; glycerophospholipid metabolism. In terms of biological role, prenyltransferase that catalyzes the transfer of the geranylgeranyl moiety of geranylgeranyl diphosphate (GGPP) to the C3 hydroxyl of sn-glycerol-1-phosphate (G1P). This reaction is the first ether-bond-formation step in the biosynthesis of archaeal membrane lipids. The protein is Geranylgeranylglyceryl phosphate synthase of Thermococcus sibiricus (strain DSM 12597 / MM 739).